The sequence spans 217 residues: 8-oxoguanine DNA glycosylase/AP lyase (217 aa).

Active-site residues include lysine 138 and aspartate 157.

It belongs to the type-2 OGG1 family.

The catalysed reaction is 2'-deoxyribonucleotide-(2'-deoxyribose 5'-phosphate)-2'-deoxyribonucleotide-DNA = a 3'-end 2'-deoxyribonucleotide-(2,3-dehydro-2,3-deoxyribose 5'-phosphate)-DNA + a 5'-end 5'-phospho-2'-deoxyribonucleoside-DNA + H(+). Its function is as follows. Catalyzes the excision of an oxidatively damaged form of guanine (7,8-dihydro-8-oxoguanine = 8-oxoG) from DNA. Also cleaves the DNA backbone at apurinic/apyrimidinic sites (AP sites). In Fusobacterium nucleatum subsp. nucleatum (strain ATCC 25586 / DSM 15643 / BCRC 10681 / CIP 101130 / JCM 8532 / KCTC 2640 / LMG 13131 / VPI 4355), this protein is 8-oxoguanine DNA glycosylase/AP lyase.